Consider the following 495-residue polypeptide: B3 domain-containing protein Os01g0234100 (495 aa).

2 disordered regions span residues 1–25 (MAIDQPIKKRGRPPGSKNTKNKMEQ) and 88–108 (PGIPQTCNTQNTSNGRTNTTE). Positions 92-108 (QTCNTQNTSNGRTNTTE) are enriched in polar residues. Residues 152–243 (FVKHMLHSHV…KFKVHIIRDK (92 aa)) constitute a DNA-binding region (TF-B3). Basic and acidic residues predominate over residues 268–282 (EATDNATKPKEDPET). The disordered stretch occupies residues 268–289 (EATDNATKPKEDPETTRVSSKV).

The protein resides in the nucleus. The polypeptide is B3 domain-containing protein Os01g0234100 (Oryza sativa subsp. japonica (Rice)).